We begin with the raw amino-acid sequence, 1162 residues long: Topoisomerase 1-associated factor 1 (1162 aa).

2 disordered regions span residues 977–1017 (TEGR…EANA) and 1127–1162 (TQVV…DTEY). Residues 993 to 1003 (QRSKGKRKAIA) show a composition bias toward basic residues.

The protein belongs to the timeless family. In terms of assembly, component of the fork protection complex (FPC) consisting of TOF1 and CSM3.

The protein localises to the nucleus. In terms of biological role, forms a fork protection complex (FPC) with CSM3 and which is required for chromosome segregation during meiosis and DNA damage repair. FPC coordinates leading and lagging strand synthesis and moves with the replication fork. FPC stabilizes replication forks in a configuration that is recognized by replication checkpoint sensors. In Kluyveromyces lactis (strain ATCC 8585 / CBS 2359 / DSM 70799 / NBRC 1267 / NRRL Y-1140 / WM37) (Yeast), this protein is Topoisomerase 1-associated factor 1 (TOF1).